A 260-amino-acid chain; its full sequence is Dynein regulatory complex subunit 6 (260 aa).

Residues 1-13 (MAPKKKGGGKKKK) show a composition bias toward basic residues. The segment at 1–43 (MAPKKKGGGKKKKKDDGAEPPHDGSWERAVESGTWEKPVTDLP) is disordered. Over residues 14–30 (KDDGAEPPHDGSWERAV) the composition is skewed to basic and acidic residues.

It belongs to the DRC6 family. As to quaternary structure, component of the nexin-dynein regulatory complex (N-DRC).

Its subcellular location is the cytoplasm. The protein resides in the cytoskeleton. The protein localises to the flagellum axoneme. Functionally, component of the nexin-dynein regulatory complex (N-DRC), a key regulator of ciliary/flagellar motility which maintains the alignment and integrity of the distal axoneme and regulates microtubule sliding in motile axonemes. In Chlamydomonas reinhardtii (Chlamydomonas smithii), this protein is Dynein regulatory complex subunit 6.